Consider the following 396-residue polypeptide: Tyrosine--tRNA ligase (396 aa).

The 'HIGH' region motif lies at 43 to 52; that stretch reads PSSPDIHLGH. Positions 227–231 match the 'KMSKS' region motif; that stretch reads KMSKS. Lys-230 serves as a coordination point for ATP. The S4 RNA-binding domain maps to 338–396; the sequence is TGVIDFIILSGLAKSKSEARRLLEQGAVEINSEKISDQNTPVKCGDIIKAGKRRYSKAI.

This sequence belongs to the class-I aminoacyl-tRNA synthetase family. TyrS type 2 subfamily. In terms of assembly, homodimer.

Its subcellular location is the cytoplasm. The enzyme catalyses tRNA(Tyr) + L-tyrosine + ATP = L-tyrosyl-tRNA(Tyr) + AMP + diphosphate + H(+). Catalyzes the attachment of tyrosine to tRNA(Tyr) in a two-step reaction: tyrosine is first activated by ATP to form Tyr-AMP and then transferred to the acceptor end of tRNA(Tyr). This chain is Tyrosine--tRNA ligase, found in Dehalococcoides mccartyi (strain CBDB1).